We begin with the raw amino-acid sequence, 99 residues long: Elongin-C (99 aa).

An N-acetylserine modification is found at Ser-2. Position 2 is a phosphoserine (Ser-2).

The protein belongs to the SKP1 family. In terms of assembly, heterodimer with ELA1. Component of a CRL3 E3 ubiquitin ligase complex consisting of the cullin CUL3, the linker protein ELC1, the substrate receptor ELA1, and the RING protein HRT1. Interacts with CIN5. Interacts with PCL6. Interacts with SNF4. Interacts with the large RNA polymerase II subunit RPO21 in a manner dependent on DEF1. Interacts with DEF1. Interacts with RAD7. Interacts with RAD16.

It is found in the cytoplasm. Its subcellular location is the nucleus. Functionally, as part of the CRL3 E3 ubiquitin ligase complex; polyubiquitylates monoubiquitylated RNA polymerase II subunit RPO21 to trigger its proteolysis; plays a role in global genomic repair. Prevents degradation of interacting proteins like PCL6 by the proteasome. This is Elongin-C (ELC1) from Saccharomyces cerevisiae (strain ATCC 204508 / S288c) (Baker's yeast).